Here is a 514-residue protein sequence, read N- to C-terminus: NAD(P)H-quinone oxidoreductase subunit 2 (514 aa).

14 helical membrane-spanning segments follow: residues 16-36 (IWPE…DLIV), 43-63 (WLPY…YFEW), 80-100 (LSIV…LMSV), 110-130 (LAEF…LSGA), 133-153 (LVMI…MTGY), 168-188 (LLIG…LYGL), 211-231 (LGLA…ISAV), 245-265 (PTPV…ALAI), 279-299 (WHFI…VVAL), 307-327 (MLAY…TANS), 335-355 (IFYL…IILF), 379-399 (LGLS…GFFG), 411-431 (GLYG…YYYI), and 467-487 (VGLV…NPLF).

This sequence belongs to the complex I subunit 2 family. NDH-1 can be composed of about 15 different subunits; different subcomplexes with different compositions have been identified which probably have different functions.

The protein localises to the cellular thylakoid membrane. The catalysed reaction is a plastoquinone + NADH + (n+1) H(+)(in) = a plastoquinol + NAD(+) + n H(+)(out). It carries out the reaction a plastoquinone + NADPH + (n+1) H(+)(in) = a plastoquinol + NADP(+) + n H(+)(out). NDH-1 shuttles electrons from an unknown electron donor, via FMN and iron-sulfur (Fe-S) centers, to quinones in the respiratory and/or the photosynthetic chain. The immediate electron acceptor for the enzyme in this species is believed to be plastoquinone. Couples the redox reaction to proton translocation, and thus conserves the redox energy in a proton gradient. Cyanobacterial NDH-1 also plays a role in inorganic carbon-concentration. The sequence is that of NAD(P)H-quinone oxidoreductase subunit 2 from Gloeothece citriformis (strain PCC 7424) (Cyanothece sp. (strain PCC 7424)).